The chain runs to 210 residues: Thymidylate kinase (210 aa).

Residue 10-17 (GPEGAGKS) coordinates ATP.

The protein belongs to the thymidylate kinase family.

It catalyses the reaction dTMP + ATP = dTDP + ADP. Its function is as follows. Phosphorylation of dTMP to form dTDP in both de novo and salvage pathways of dTTP synthesis. The chain is Thymidylate kinase from Ectopseudomonas mendocina (strain ymp) (Pseudomonas mendocina).